Reading from the N-terminus, the 129-residue chain is Large ribosomal subunit protein bL20 (129 aa).

It belongs to the bacterial ribosomal protein bL20 family.

Functionally, binds directly to 23S ribosomal RNA and is necessary for the in vitro assembly process of the 50S ribosomal subunit. It is not involved in the protein synthesizing functions of that subunit. The polypeptide is Large ribosomal subunit protein bL20 (Mycobacteroides abscessus (strain ATCC 19977 / DSM 44196 / CCUG 20993 / CIP 104536 / JCM 13569 / NCTC 13031 / TMC 1543 / L948) (Mycobacterium abscessus)).